The sequence spans 362 residues: 3-dehydroquinate synthase (362 aa).

Residues 95–99 (GVVGD), 119–120 (TT), K132, and K141 each bind NAD(+). Zn(2+) is bound by residues E174, H238, and H255.

Belongs to the sugar phosphate cyclases superfamily. Dehydroquinate synthase family. Co(2+) serves as cofactor. Zn(2+) is required as a cofactor. Requires NAD(+) as cofactor.

The protein resides in the cytoplasm. The catalysed reaction is 7-phospho-2-dehydro-3-deoxy-D-arabino-heptonate = 3-dehydroquinate + phosphate. It functions in the pathway metabolic intermediate biosynthesis; chorismate biosynthesis; chorismate from D-erythrose 4-phosphate and phosphoenolpyruvate: step 2/7. Functionally, catalyzes the conversion of 3-deoxy-D-arabino-heptulosonate 7-phosphate (DAHP) to dehydroquinate (DHQ). This is 3-dehydroquinate synthase from Chlorobium luteolum (strain DSM 273 / BCRC 81028 / 2530) (Pelodictyon luteolum).